Consider the following 337-residue polypeptide: Neurogenic differentiation factor 6 (337 aa).

The segment at 43–82 (LRGKSIKRAPGEETEKEEEEEDREEEDENGLPRRRGLRKK) is disordered. Acidic residues predominate over residues 54–71 (EETEKEEEEEDREEEDEN). Residues 80-86 (RKKKTTK) carry the Nuclear localization signal motif. The region spanning 94 to 146 (FRRQEANARERNRMHGLNDALDNLRKVVPCYSKTQKLSKIETLRLAKNYIWAL) is the bHLH domain.

Efficient DNA binding requires dimerization with another bHLH protein.

The protein localises to the nucleus. Activates E box-dependent transcription in collaboration with TCF3/E47. May be a trans-acting factor involved in the development and maintenance of the mammalian nervous system. Transactivates the promoter of its own gene. The chain is Neurogenic differentiation factor 6 (NEUROD6) from Bos taurus (Bovine).